The primary structure comprises 249 residues: (2S)-[(R)-hydroxy(phenyl)methyl]succinyl-CoA dehydrogenase subunit BbsC (249 aa).

Belongs to the short-chain dehydrogenases/reductases (SDR) family. In terms of assembly, heterotetramer composed of 2 inactive BbsC subunits and 2 active BbsD subunits.

Its pathway is xenobiotic degradation; toluene degradation. Involved in an anaerobic toluene degradation pathway. Catalytically inactive subunit, which is probably required for the structural and/or regulatory integrity of the catalytic subunit BbsD. This subunit cannot bind NAD(+) or substrate. This Thauera aromatica protein is (2S)-[(R)-hydroxy(phenyl)methyl]succinyl-CoA dehydrogenase subunit BbsC.